A 211-amino-acid chain; its full sequence is Ribosome maturation factor RimM (211 aa).

A PRC barrel domain is found at 111 to 182 (PDAWYDHQLV…TLVITPPLGL (72 aa)). Residues 184–211 (EEIPDEQPTPSATSDAEPGSAPEGDDAR) are disordered.

This sequence belongs to the RimM family. As to quaternary structure, binds ribosomal protein uS19.

The protein resides in the cytoplasm. In terms of biological role, an accessory protein needed during the final step in the assembly of 30S ribosomal subunit, possibly for assembly of the head region. Essential for efficient processing of 16S rRNA. May be needed both before and after RbfA during the maturation of 16S rRNA. It has affinity for free ribosomal 30S subunits but not for 70S ribosomes. This is Ribosome maturation factor RimM from Clavibacter sepedonicus (Clavibacter michiganensis subsp. sepedonicus).